Reading from the N-terminus, the 147-residue chain is uncharacterized protein (147 aa).

Residues 51-72 (VTSSMSVMNDSEECPLINGPSM) are disordered.

This is an uncharacterized protein from Gallid herpesvirus 2 (strain GA) (GaHV-2).